The sequence spans 232 residues: Phosphoribosylaminoimidazole-succinocarboxamide synthase (232 aa).

The protein belongs to the SAICAR synthetase family.

It catalyses the reaction 5-amino-1-(5-phospho-D-ribosyl)imidazole-4-carboxylate + L-aspartate + ATP = (2S)-2-[5-amino-1-(5-phospho-beta-D-ribosyl)imidazole-4-carboxamido]succinate + ADP + phosphate + 2 H(+). It functions in the pathway purine metabolism; IMP biosynthesis via de novo pathway; 5-amino-1-(5-phospho-D-ribosyl)imidazole-4-carboxamide from 5-amino-1-(5-phospho-D-ribosyl)imidazole-4-carboxylate: step 1/2. In Finegoldia magna (strain ATCC 29328 / DSM 20472 / WAL 2508) (Peptostreptococcus magnus), this protein is Phosphoribosylaminoimidazole-succinocarboxamide synthase.